The chain runs to 489 residues: Argininosuccinate lyase (489 aa).

The segment at Met-1 to His-20 is disordered.

It belongs to the lyase 1 family. Argininosuccinate lyase subfamily.

The protein localises to the cytoplasm. The catalysed reaction is 2-(N(omega)-L-arginino)succinate = fumarate + L-arginine. Its pathway is amino-acid biosynthesis; L-arginine biosynthesis; L-arginine from L-ornithine and carbamoyl phosphate: step 3/3. In Acidothermus cellulolyticus (strain ATCC 43068 / DSM 8971 / 11B), this protein is Argininosuccinate lyase.